A 628-amino-acid chain; its full sequence is MALVSAVPLNSKLCLCRTLFGFSHELKAIHSTVPNLGMCRGGKSIAPSMSMSSTTSVSNEDGVPRRIAGHHSNLWDDDSIASLSTSYEAPSYRERADRVIGEVKNIFDLMSVEDGVFTSPLSDLHHRLWMVDSVERLGIDRHFKHEINSALDHVYSYWTEKGIGRGRESGVTDLNSTALGLRTLRLHGYTVSSHVLDHFKNEKGQFTWSAIQTEGEIRDVLNLFRASLIAFPGEKIMEAAEIFSTMYLKDALQKIPPSGLSQEIEYLLEFGWHTNLPRMETRMYIDVFGEDTTFETPYLIREKLLELAKLEFNIFHSLVKRELQSLTRWWKDYGFPEITFSRHRHVEYYTLAACIANDPKHSAFRLGFGKISHMITILDDIYDTFGTMEELELLTAAFKRWDPSSIECLPDYMKGVYMAVYDNINEMAREAQKIQGWDTVSYARKSWEAFIGAYIQEAKWISSGYLPTFDEYLENGKVSFGSRITTLEPMLTLGFPLPPRILQEIDFPSKFNDLTCAILRLKGDTQCYKADRARGEEASAVSCYMKDHPGITEEDAVNQVNAMVDNLTKELNWELLRPDSGVPISYKKVAFDICRVFHYGYKYRDGFSVASVEIKNLVTRTVVETVPL.

3 residues coordinate Mg(2+): D379, D383, and D531. Residues 379–383 (DDIYD) carry the DDXXD motif motif.

It belongs to the terpene synthase family. Tpsd subfamily. Mg(2+) is required as a cofactor. Requires Mn(2+) as cofactor.

The protein localises to the plastid. The protein resides in the chloroplast. The enzyme catalyses (2E)-geranyl diphosphate = (1R,5R)-alpha-pinene + diphosphate. It participates in terpene metabolism; oleoresin biosynthesis. The protein operates within secondary metabolite biosynthesis; terpenoid biosynthesis. In terms of biological role, monoterpene synthase (TPS) involved in the biosynthesis of monoterpene natural products included in conifer oleoresin secretions and volatile emissions; these compounds contribute to biotic and abiotic stress defense against herbivores and pathogens. Catalyzes the conversion of (2E)-geranyl diphosphate (GPP) to (+)-alpha-pinene. The chain is (+)-alpha pinene synthase 1, chloroplastic from Pinus contorta (Shore pine).